Reading from the N-terminus, the 148-residue chain is Lipoprotein signal peptidase (148 aa).

2 helical membrane passes run 57-77 and 88-105; these read VLLVLVTLLIMIGVIYYFIKY and VSFIVSGALGNLYDRIFY. Active-site residues include D110 and D129. A helical membrane pass occupies residues 124–144; that stretch reads TFNIADILVVVGTIMLAIFLL.

It belongs to the peptidase A8 family.

The protein resides in the cell membrane. It carries out the reaction Release of signal peptides from bacterial membrane prolipoproteins. Hydrolyzes -Xaa-Yaa-Zaa-|-(S,diacylglyceryl)Cys-, in which Xaa is hydrophobic (preferably Leu), and Yaa (Ala or Ser) and Zaa (Gly or Ala) have small, neutral side chains.. The protein operates within protein modification; lipoprotein biosynthesis (signal peptide cleavage). Its function is as follows. This protein specifically catalyzes the removal of signal peptides from prolipoproteins. The protein is Lipoprotein signal peptidase of Clostridium novyi (strain NT).